The following is a 119-amino-acid chain: Basic phospholipase A2 acanthin-1 (119 aa).

Disulfide bonds link Cys-11-Cys-71, Cys-27-Cys-118, Cys-29-Cys-45, Cys-44-Cys-99, Cys-51-Cys-92, Cys-60-Cys-85, and Cys-78-Cys-90. Residues Tyr-28, Gly-30, and Gly-32 each coordinate Ca(2+). His-48 is an active-site residue. Ca(2+) is bound at residue Asp-49. The active site involves Asp-93.

Ca(2+) serves as cofactor. As to expression, expressed by the venom gland.

The protein localises to the secreted. The catalysed reaction is a 1,2-diacyl-sn-glycero-3-phosphocholine + H2O = a 1-acyl-sn-glycero-3-phosphocholine + a fatty acid + H(+). Snake venom phospholipase A2 (PLA2) that potently inhibits ADP-(IC(50)=10 nM) and collagen-induced (IC(50)=7 nM) platelet aggregation when tested on human whole blood. PLA2 catalyzes the calcium-dependent hydrolysis of the 2-acyl groups in 3-sn-phosphoglycerides. The chain is Basic phospholipase A2 acanthin-1 from Acanthophis antarcticus (Common death adder).